A 132-amino-acid polypeptide reads, in one-letter code: Fatty acid-binding protein 12 (132 aa).

A fatty acid-binding positions include arginine 107 and 127–129 (RTY).

Belongs to the calycin superfamily. Fatty-acid binding protein (FABP) family. As to expression, highly expressed in adult retina and testis with lower levels in cerebral cortex, kidney and epididymis. In the retina, strongly expressed in the ganglion cell layer and throughout the inner nuclear layer in amacrine and bipolar cells. Not expressed in the outer nuclear layer. In the testis, detected in the seminiferous tubules.

Its function is as follows. May play a role in lipid transport. This Rattus norvegicus (Rat) protein is Fatty acid-binding protein 12.